The chain runs to 1100 residues: Conjugal transfer protein TraA (1100 aa).

404 to 411 serves as a coordination point for ATP; sequence GRAGAGKT.

This sequence belongs to the MobA/MobL family.

The chain is Conjugal transfer protein TraA (traA) from Rhizobium radiobacter (Agrobacterium tumefaciens).